The chain runs to 760 residues: Translocation protein SEC63 homolog (760 aa).

Topologically, residues 1-14 are lumenal; the sequence is MAGQQFQYDDSGNT. A helical transmembrane segment spans residues 15–35; the sequence is FFYFLTSFVGLIVIPATYYLW. Topologically, residues 36–69 are cytoplasmic; sequence PRDQNAEQIRLKNIRKVYGRCMWYRLRLLKPQPN. Residues 70–90 form a helical membrane-spanning segment; that stretch reads IIPTVKKIVLLAGWALFLFLA. At 91–188 the chain is on the lumenal side; the sequence is YKVSKTDREY…LPAWIVDQKN (98 aa). The 62-residue stretch at 104 to 165 folds into the J domain; that stretch reads NPYEVLNLDP…ESRKNWEEFG (62 aa). Residues 189–209 traverse the membrane as a helical segment; sequence SILVLLVYGLAFMVILPVVVG. Residues 197 to 541 form the SEC63 1 domain; it reads GLAFMVILPV…LKKKPTPVLL (345 aa). Residues 210-760 are Cytoplasmic-facing; the sequence is SWWYRSIRYS…EEEEEEEDDD (551 aa). The interval 492–617 is disordered; the sequence is AEEQPAEDGQ…DDEAEWQELQ (126 aa). Over residues 518 to 536 the composition is skewed to basic residues; the sequence is KGPKKTAKSKKKKPLKKKP. The residue at position 537 (threonine 537) is a Phosphothreonine. A compositionally biased stretch (basic and acidic residues) spans 582-608; it reads NRDSQSEKDDGSDRDSDREQDEKQNKD. Residues 597–635 adopt a coiled-coil conformation; the sequence is SDREQDEKQNKDDEAEWQELQQSIQRKERALLETKSKIT. The SEC63 2 domain occupies 637 to 714; the sequence is PVYSLYFPEE…GLDQIKPLKL (78 aa). A disordered region spans residues 720–760; that stretch reads KPVPENHPQWDTAIEGDEDQEDSEGFEDSFEEEEEEEEDDD. The span at 733-760 shows a compositional bias: acidic residues; that stretch reads IEGDEDQEDSEGFEDSFEEEEEEEEDDD. A phosphoserine mark is found at serine 742 and serine 748.

As to quaternary structure, the ER translocon complex consists of channel-forming core components SEC61A1, SEC61B and SEC61G and different auxiliary components such as SEC62 and SEC63. As to expression, widely expressed, with high levels in the liver.

It localises to the endoplasmic reticulum membrane. In terms of biological role, mediates cotranslational and post-translational transport of certain precursor polypeptides across endoplasmic reticulum (ER). Proposed to play an auxiliary role in recognition of precursors with short and apolar signal peptides. May cooperate with SEC62 and HSPA5/BiP to facilitate targeting of small presecretory proteins into the SEC61 channel-forming translocon complex, triggering channel opening for polypeptide translocation to the ER lumen. Required for efficient PKD1/Polycystin-1 biogenesis and trafficking to the plasma membrane of the primary cilia. This chain is Translocation protein SEC63 homolog, found in Homo sapiens (Human).